The primary structure comprises 413 residues: Metacaspase-1A (413 aa).

The segment at 1–104 is disordered; it reads MQNHHHQQSS…PTDPVAFGHG (104 aa). Over residues 36–47 the composition is skewed to pro residues; that stretch reads SPQPGYGAPPPH. A compositionally biased stretch (low complexity) spans 49-58; sequence GYGQPPSGYG. A compositionally biased stretch (polar residues) spans 75–85; sequence GMNQYQNTYSH. Residues His204 and Cys260 contribute to the active site.

It belongs to the peptidase C14B family.

Involved in cell death (apoptosis). Required for the apoptotic-like loss of membrane phospholipid asymmetry at stationary phase and facilitates growth under conditions of endoplasmic reticulum stress. This Aspergillus fumigatus (strain CBS 144.89 / FGSC A1163 / CEA10) (Neosartorya fumigata) protein is Metacaspase-1A (casA).